The following is a 334-amino-acid chain: Holliday junction branch migration complex subunit RuvB (334 aa).

A large ATPase domain (RuvB-L) region spans residues 4-184 (ADRIISASPQ…FGIVQRLEFY (181 aa)). Residues Ile23, Arg24, Gly65, Lys68, Thr69, Thr70, 131 to 133 (EDY), Arg174, Tyr184, and Arg221 contribute to the ATP site. Thr69 contributes to the Mg(2+) binding site. The small ATPAse domain (RuvB-S) stretch occupies residues 185-255 (NVDDLTSIVK…IAKQALVMLD (71 aa)). Positions 258-334 (PQGFDFMDIK…YAHLGISLSE (77 aa)) are head domain (RuvB-H). Residues Arg294, Arg313, and Arg318 each contribute to the DNA site.

It belongs to the RuvB family. Homohexamer. Forms an RuvA(8)-RuvB(12)-Holliday junction (HJ) complex. HJ DNA is sandwiched between 2 RuvA tetramers; dsDNA enters through RuvA and exits via RuvB. An RuvB hexamer assembles on each DNA strand where it exits the tetramer. Each RuvB hexamer is contacted by two RuvA subunits (via domain III) on 2 adjacent RuvB subunits; this complex drives branch migration. In the full resolvosome a probable DNA-RuvA(4)-RuvB(12)-RuvC(2) complex forms which resolves the HJ.

The protein localises to the cytoplasm. The catalysed reaction is ATP + H2O = ADP + phosphate + H(+). The RuvA-RuvB-RuvC complex processes Holliday junction (HJ) DNA during genetic recombination and DNA repair, while the RuvA-RuvB complex plays an important role in the rescue of blocked DNA replication forks via replication fork reversal (RFR). RuvA specifically binds to HJ cruciform DNA, conferring on it an open structure. The RuvB hexamer acts as an ATP-dependent pump, pulling dsDNA into and through the RuvAB complex. RuvB forms 2 homohexamers on either side of HJ DNA bound by 1 or 2 RuvA tetramers; 4 subunits per hexamer contact DNA at a time. Coordinated motions by a converter formed by DNA-disengaged RuvB subunits stimulates ATP hydrolysis and nucleotide exchange. Immobilization of the converter enables RuvB to convert the ATP-contained energy into a lever motion, pulling 2 nucleotides of DNA out of the RuvA tetramer per ATP hydrolyzed, thus driving DNA branch migration. The RuvB motors rotate together with the DNA substrate, which together with the progressing nucleotide cycle form the mechanistic basis for DNA recombination by continuous HJ branch migration. Branch migration allows RuvC to scan DNA until it finds its consensus sequence, where it cleaves and resolves cruciform DNA. This Haemophilus ducreyi (strain 35000HP / ATCC 700724) protein is Holliday junction branch migration complex subunit RuvB.